The following is a 927-amino-acid chain: Lysine-specific demethylase JMJ28 (927 aa).

Residues 7-52 (VPDEFRCNRSDGKQWRCKRRALEGKKMCESHHSQQSLKRSKQKVAE) form the WRC domain. Positions 30-37 (GKKMCESH) match the Nuclear localization signal 1 motif. The interval 30–92 (GKKMCESHHS…RLGKSKRKRV (63 aa)) is disordered. Residues 80–91 (RSKRLGKSKRKR) show a composition bias toward basic residues. The short motif at 127 to 134 (EKRKRLPN) is the Nuclear localization signal 2 element. Zn(2+)-binding residues include cysteine 227, cysteine 230, cysteine 241, cysteine 244, cysteine 250, cysteine 253, cysteine 269, and cysteine 272. The RING-type; degenerate zinc finger occupies 227–273 (CHWCGTRGFGDLISCLSCEREFFCIDCIEKRNKGSKEEVEKKCPVCR). Over residues 330–339 (ENDAEKKEGN) the composition is skewed to basic and acidic residues. Disordered regions lie at residues 330-359 (ENDA…QPCS) and 701-736 (RSKN…SQHC). The JmjC domain occupies 601-881 (FPNHYAEILN…ESIKRVKELN (281 aa)).

Belongs to the JARID1 histone demethylase family. Interacts with the FBH transcription factors FBH1, FBH2, FBH3 and FBH4. The cofactor is Fe(2+). Expressed in inflorescences, flowers, roots, siliques, leaves and stems, especially in the vasculature (mainly phloem), with highest levels in floral organs. Present at high levels in flowers, shoot apex and young seeds, but observed at low levels in dry seeds, root apex and anthers.

The protein resides in the nucleus. In terms of biological role, may function as histone H3 lysine demethylase and be involved in regulation of gene expression. Regulates flowering time by promoting CONSTANS (CO) and CONSTANS-LIKE genes (e.g. COL2 and COL5) expression via interaction with FBH transcription factors (FBH1, FBH2, FBH3 and FBH4) at their loci to remove H3K9me2 repressive histone marks. Also modulates the expression of several developmental genes such as MYB30, TFS1, AGL6 and RVE2. This is Lysine-specific demethylase JMJ28 from Arabidopsis thaliana (Mouse-ear cress).